Consider the following 189-residue polypeptide: Glycerol-3-phosphate acyltransferase (189 aa).

The next 5 membrane-spanning stretches (helical) occupy residues 1–21 (MFWLLALLAYLLGSLSFAIVL), 50–70 (KLAILTLLGDLCKGLLPVLLA), 77–97 (LHAQAWVGVCAVLGHLFPLYF), 111–131 (MLMGLYFPAALLAIGAWLLTF), and 151–171 (LLAWREPEALLPITVLTAMIV).

This sequence belongs to the PlsY family. Probably interacts with PlsX.

It localises to the cell inner membrane. The catalysed reaction is an acyl phosphate + sn-glycerol 3-phosphate = a 1-acyl-sn-glycero-3-phosphate + phosphate. It functions in the pathway lipid metabolism; phospholipid metabolism. In terms of biological role, catalyzes the transfer of an acyl group from acyl-phosphate (acyl-PO(4)) to glycerol-3-phosphate (G3P) to form lysophosphatidic acid (LPA). This enzyme utilizes acyl-phosphate as fatty acyl donor, but not acyl-CoA or acyl-ACP. This chain is Glycerol-3-phosphate acyltransferase, found in Pseudomonas putida (strain GB-1).